The sequence spans 69 residues: Neurotoxin Cex7 (69 aa).

A signal peptide is located at residue Ala1. The LCN-type CS-alpha/beta domain occupies 2-67; sequence REGYLVSKST…TYPIPGKSCG (66 aa). 4 cysteine pairs are disulfide-bonded: Cys13–Cys66, Cys17–Cys42, Cys26–Cys47, and Cys30–Cys49. Cys66 is subject to Cysteine amide. A propeptide spanning residues 67–69 is cleaved from the precursor; sequence GKK.

Belongs to the long (4 C-C) scorpion toxin superfamily. Sodium channel inhibitor family. Beta subfamily. In terms of tissue distribution, expressed by the venom gland.

Its subcellular location is the secreted. Its function is as follows. Beta toxins bind voltage-independently at site-4 of sodium channels (Nav) and shift the voltage of activation toward more negative potentials thereby affecting sodium channel activation and promoting spontaneous and repetitive firing. This chain is Neurotoxin Cex7, found in Centruroides exilicauda (Bark scorpion).